Here is a 419-residue protein sequence, read N- to C-terminus: Hydrolase LUC6 (419 aa).

Residue S238 is part of the active site.

The protein belongs to the AB hydrolase superfamily. FUS2 hydrolase family.

It functions in the pathway mycotoxin biosynthesis. Hydrolase; part of the gene cluster that mediates the biosynthesis of the mycotoxin lucilactaene and the lucilactaene-related compound NG-391 that act as cell cycle inhibitors with potent growth inhibitory activity against malarial parasites, moderate growth inhibitory activity against cancer cells, and no activity against bacteria and fungi. Within the pathway, LUC6 may catalyze the 2-pyrrolidone ring formation to form prelucilactaene C from prelucilactaene B, followed by C-15 hydroxylation by the same enzyme to give prelucilactaene D, epoxydation to yield prelucilactaene E, and finally cyclization to yield prelucilactaene F. The pathway begins with the hybrid PKS-NRPS synthetase LUC5 which is responsible for the condensation of one acetyl-coenzyme A (CoA) unit with six malonyl-CoA units and the amide linkage of the arising heptaketide and homoserine, subsequently releasing the first intermediate prelucilactaene B. Both the cytochrome P450 monooxygenase LUC2 and the hydrolase LUC6 function in parallel in modification of prelucilactaene B. LUC6 may catalyze the 2-pyrrolidone ring formation to form prelucilactaene C from prelucilactaene B, followed by C-15 hydroxylation by the same enzyme to give prelucilactaene D, which is then converted to prelucilactaene E by epoxidation, and finally to prelucilactaene F by cyclization. Prelucilactane D, prelucilactaene E, and prelucilactaene F can be converted to dihydrolucilactaene, NG391, and lucilactaene, respectively, via C-20 methyl group hydroxylation by the cytochrome P450 monooxygenase LUC2. However, LUC2, unlike FUS8 in fusarin C biosynthesis, is not enough for the full oxidation of the C-20 methyl group into carboxylic acid, which is a prerequisite for the final methylation step. The aldehyde dehydrogenase LUC3 is involved in the biosynthesis by further oxidation of the C-20 alcoholic analog prelucilactaene G into a carboxylic derivative. This unidentified carboxylic derivative may be converted to demethyllucilactaene. As the last step, the methyltransferase LUC1 methylates the hydroxyl group at C-21 of demethyllucilactaene to generate lucilactaene. The sequence is that of Hydrolase LUC6 from Fusarium sp.